The sequence spans 330 residues: Fructose-1,6-bisphosphatase class 1 (330 aa).

4 residues coordinate Mg(2+): E84, D103, L105, and D106. Residues 106–109 (DGSS), N196, and K262 each bind substrate. Residue E268 participates in Mg(2+) binding.

This sequence belongs to the FBPase class 1 family. Homotetramer. Mg(2+) is required as a cofactor.

It is found in the cytoplasm. It carries out the reaction beta-D-fructose 1,6-bisphosphate + H2O = beta-D-fructose 6-phosphate + phosphate. Its pathway is carbohydrate biosynthesis; gluconeogenesis. The chain is Fructose-1,6-bisphosphatase class 1 from Shewanella sp. (strain W3-18-1).